Reading from the N-terminus, the 537-residue chain is Cytochrome P450 monooxygenase ltmQ (537 aa).

Residues 10–30 (FPKLNFATIVISGATIIGIIF) traverse the membrane as a helical segment. N-linked (GlcNAc...) asparagine glycans are attached at residues N182, N188, and N310. Residue C476 participates in heme binding.

The protein belongs to the cytochrome P450 family. Heme is required as a cofactor.

The protein resides in the membrane. The protein operates within secondary metabolite biosynthesis. Its function is as follows. Cytochrome P450 monooxygenase; part of the gene clusters that mediates the biosynthesis of lolitrems, indole-diterpene mycotoxins that are potent tremorgens in mammals, and are synthesized by clavicipitaceous fungal endophytes in association with their grass hosts. The geranylgeranyl diphosphate (GGPP) synthase ltmG is proposed to catalyze the first step in lolitrem biosynthesis. LtmG catalyzes a series of iterative condensations of isopentenyl diphosphate (IPP) with dimethylallyl diphosphate (DMAPP), geranyl diphosphate (GPP), and farnesyl diphosphate (FPP), to form GGPP. GGPP then condenses with indole-3-glycerol phosphate to form 3-geranylgeranylindole, an acyclic intermediate, to be incorporated into paxilline. Either ltmG or ltmC could be responsible for this step, as both are putative prenyl transferases. The FAD-dependent monooxygenase ltmM then catalyzes the epoxidation of the two terminal alkenes of the geranylgeranyl moiety, which is subsequently cyclized by ltmB, to paspaline. The cytochrome P450 monooxygenases ltmQ and ltmP can sequentially oxidize paspaline to terpendole E and terpendole F. Alternatively, ltmP converts paspaline to an intermediate which is oxidized by ltmQ to terpendole F. LtmF, ltmK, ltmE and ltmJ appear to be unique to the epichloe endophytes. The prenyltransferase ltmF is involved in the 27-hydroxyl-O-prenylation. The cytochrome P450 monooxygenase ltmK is required for the oxidative acetal ring formation. The multi-functional prenyltransferase ltmE is required for C20- and C21-prenylations of the indole ring of paspalanes and acts together with the cytochrome P450 monooxygenase ltmJ to yield lolitremanes by multiple oxidations and ring closures. The stereoisomer pairs of lolitriol and lolitrem N or lolitrem B and lolitrem F may be attributed to variations in the way in which ring closure can occur under the action of ltmJ. While the major product of this pathway is lolitrem B, the prenyl transferases and cytochrome P450 monooxygenases identified in this pathway have a remarkable versatility in their regio- and stereo-specificities to generate a diverse range of metabolites that are products of a metabolic grid rather than a linear pathway. The polypeptide is Cytochrome P450 monooxygenase ltmQ (Epichloe festucae var. lolii (Neotyphodium lolii)).